A 170-amino-acid polypeptide reads, in one-letter code: Cytochrome c-type biogenesis protein CcmE (170 aa).

At 1 to 7 the chain is on the cytoplasmic side; that stretch reads MTRKQRR. The helical; Signal-anchor for type II membrane protein transmembrane segment at 8-28 threads the bilayer; it reads LTIIGGALFVLAVAAGLVLNA. The Periplasmic portion of the chain corresponds to 29-170; the sequence is LRDSIVFFST…GEKTAAGATQ (142 aa). Positions 122 and 126 each coordinate heme. Residues 137–146 are compositionally biased toward basic and acidic residues; it reads KQGHWKDDYG. The tract at residues 137–170 is disordered; sequence KQGHWKDDYGKPQAAKPGPVSMREGEKTAAGATQ.

Belongs to the CcmE/CycJ family.

It is found in the cell inner membrane. In terms of biological role, heme chaperone required for the biogenesis of c-type cytochromes. Transiently binds heme delivered by CcmC and transfers the heme to apo-cytochromes in a process facilitated by CcmF and CcmH. The protein is Cytochrome c-type biogenesis protein CcmE of Bradyrhizobium sp. (strain BTAi1 / ATCC BAA-1182).